A 124-amino-acid polypeptide reads, in one-letter code: Fluoride-specific ion channel FluC (124 aa).

4 helical membrane-spanning segments follow: residues 1 to 21 (MGVV…RFLL), 35 to 55 (VGTL…FAYL), 68 to 88 (LLIT…YESF), and 99 to 119 (FLAY…LGYI). 2 residues coordinate Na(+): glycine 75 and threonine 78.

The protein belongs to the fluoride channel Fluc/FEX (TC 1.A.43) family.

Its subcellular location is the cell inner membrane. The catalysed reaction is fluoride(in) = fluoride(out). Na(+) is not transported, but it plays an essential structural role and its presence is essential for fluoride channel function. Functionally, fluoride-specific ion channel. Important for reducing fluoride concentration in the cell, thus reducing its toxicity. The sequence is that of Fluoride-specific ion channel FluC from Aquifex aeolicus (strain VF5).